The following is a 528-amino-acid chain: Probable rhamnogalacturonate lyase A (528 aa).

The signal sequence occupies residues 1–20 (MLSKATLLLFLPSWARVTYA). Asparagine 46 is a glycosylation site (N-linked (GlcNAc...) asparagine). A disulfide bond links cysteine 50 and cysteine 93. N-linked (GlcNAc...) asparagine glycosylation is present at asparagine 148. Cysteines 184 and 193 form a disulfide. Asparagine 351 carries N-linked (GlcNAc...) asparagine glycosylation.

The protein belongs to the polysaccharide lyase 4 family.

It localises to the secreted. It catalyses the reaction Endotype eliminative cleavage of L-alpha-rhamnopyranosyl-(1-&gt;4)-alpha-D-galactopyranosyluronic acid bonds of rhamnogalacturonan I domains in ramified hairy regions of pectin leaving L-rhamnopyranose at the reducing end and 4-deoxy-4,5-unsaturated D-galactopyranosyluronic acid at the non-reducing end.. Pectinolytic enzymes consist of four classes of enzymes: pectin lyase, polygalacturonase, pectin methylesterase and rhamnogalacturonase. Degrades the rhamnogalacturonan I (RG-I) backbone of pectin. The polypeptide is Probable rhamnogalacturonate lyase A (rglA) (Aspergillus fumigatus (strain CBS 144.89 / FGSC A1163 / CEA10) (Neosartorya fumigata)).